The chain runs to 176 residues: Avian agnoprotein 1a (176 aa).

2 disordered regions span residues 1–85 and 116–176; these read MSTP…GKLE and VYAA…RPAR. Positions 75-85 are enriched in basic and acidic residues; sequence YDRQNRFGKLE. Residues 76–119 are a coiled coil; sequence DRQNRFGKLESEIRETKSQLETLRQELKHLQADVDDLKETVYAA. Residues 137–161 are compositionally biased toward low complexity; the sequence is TPTATTPEASPAAPTTESTETTGPS.

In terms of assembly, interacts with VP1.

The protein resides in the virion. Its subcellular location is the host nucleus. The chain is Avian agnoprotein 1a from Budgerigar fledgling disease virus (BFPyV).